The sequence spans 180 residues: Inorganic pyrophosphatase (180 aa).

Positions 28, 42, and 54 each coordinate substrate. Positions 66, 71, and 102 each coordinate Mg(2+). Residue tyrosine 139 coordinates substrate.

It belongs to the PPase family. In terms of assembly, homohexamer. Requires Mg(2+) as cofactor.

The protein resides in the cytoplasm. The catalysed reaction is diphosphate + H2O = 2 phosphate + H(+). Functionally, hydrolyzes PPi generated in anabolic reactions. In terms of biological role, catalyzes the hydrolysis of inorganic pyrophosphate (PPi) forming two phosphate ions. The chain is Inorganic pyrophosphatase from Pseudanabaena sp. (strain PCC 6903).